Reading from the N-terminus, the 451-residue chain is uncharacterized protein (451 aa).

Disordered regions lie at residues 89–150 (PRLS…ISRY) and 164–222 (QVGE…KTFG). The segment covering 104–121 (QKPTISRESFVWESSASI) has biased composition (polar residues). Residues 137 to 147 (SSTPSIEPESI) are compositionally biased toward low complexity. Over residues 175-222 (RAADSENERRPSEVREAPESRRRRETSETGSDKSKAPPPIKEIKKTFG) the composition is skewed to basic and acidic residues. A helical membrane pass occupies residues 358–376 (LIGLMLFQTTIFIISKIIA). Positions 401–451 (RNGSSSGFASGTSSPLVFIPRTKRPSLVPSEKKMRGPSVTRDLAAEQERDA) are disordered. Over residues 403–414 (GSSSGFASGTSS) the composition is skewed to low complexity.

It belongs to the IIV-6 067R family.

Its subcellular location is the membrane. This is an uncharacterized protein from Invertebrate iridescent virus 3 (IIV-3).